A 276-amino-acid polypeptide reads, in one-letter code: Large ribosomal subunit protein uL2 (276 aa).

The disordered stretch occupies residues 219–268; the sequence is TVRGSVMNPNDHPHGGGEGRQPVGRKSPMTPWGKPALGLKTRNKKAKSSK.

The protein belongs to the universal ribosomal protein uL2 family. As to quaternary structure, part of the 50S ribosomal subunit. Forms a bridge to the 30S subunit in the 70S ribosome.

Its function is as follows. One of the primary rRNA binding proteins. Required for association of the 30S and 50S subunits to form the 70S ribosome, for tRNA binding and peptide bond formation. It has been suggested to have peptidyltransferase activity; this is somewhat controversial. Makes several contacts with the 16S rRNA in the 70S ribosome. The protein is Large ribosomal subunit protein uL2 of Lactococcus lactis subsp. lactis (strain IL1403) (Streptococcus lactis).